A 258-amino-acid polypeptide reads, in one-letter code: Octanoyltransferase (258 aa).

A BPL/LPL catalytic domain is found at 42–226; the sequence is NVGTDTLLLL…AVVAALDGEL (185 aa). Residues 80–87, 156–158, and 169–171 each bind substrate; these read RGGKITWH, AIG, and GFS. The active-site Acyl-thioester intermediate is Cys187.

Belongs to the LipB family.

The protein resides in the cytoplasm. The catalysed reaction is octanoyl-[ACP] + L-lysyl-[protein] = N(6)-octanoyl-L-lysyl-[protein] + holo-[ACP] + H(+). The protein operates within protein modification; protein lipoylation via endogenous pathway; protein N(6)-(lipoyl)lysine from octanoyl-[acyl-carrier-protein]: step 1/2. Functionally, catalyzes the transfer of endogenously produced octanoic acid from octanoyl-acyl-carrier-protein onto the lipoyl domains of lipoate-dependent enzymes. Lipoyl-ACP can also act as a substrate although octanoyl-ACP is likely to be the physiological substrate. This is Octanoyltransferase from Rhodococcus jostii (strain RHA1).